The sequence spans 858 residues: Leucine--tRNA ligase (858 aa).

A 'HIGH' region motif is present at residues 53–63; sequence PYPSGNLHMGH. Positions 622–626 match the 'KMSKS' region motif; sequence KMSKS. Residue K625 coordinates ATP.

The protein belongs to the class-I aminoacyl-tRNA synthetase family.

Its subcellular location is the cytoplasm. It carries out the reaction tRNA(Leu) + L-leucine + ATP = L-leucyl-tRNA(Leu) + AMP + diphosphate. The protein is Leucine--tRNA ligase of Prochlorococcus marinus subsp. pastoris (strain CCMP1986 / NIES-2087 / MED4).